A 442-amino-acid chain; its full sequence is D-serine dehydratase (442 aa).

Lys-118 carries the post-translational modification N6-(pyridoxal phosphate)lysine.

This sequence belongs to the serine/threonine dehydratase family. DsdA subfamily. In terms of assembly, monomer. It depends on pyridoxal 5'-phosphate as a cofactor.

The catalysed reaction is D-serine = pyruvate + NH4(+). The protein is D-serine dehydratase of Escherichia fergusonii (strain ATCC 35469 / DSM 13698 / CCUG 18766 / IAM 14443 / JCM 21226 / LMG 7866 / NBRC 102419 / NCTC 12128 / CDC 0568-73).